The chain runs to 333 residues: Electron transfer flavoprotein subunit alpha, mitochondrial (333 aa).

A mitochondrion-targeting transit peptide spans Met1 to Phe19. Positions Gln20 to Leu204 are domain I. N6-acetyllysine; alternate is present on Lys59. An N6-succinyllysine; alternate modification is found at Lys59. An N6-acetyllysine modification is found at Lys62. Lys69 is modified (N6-acetyllysine; alternate). Lys69 carries the N6-succinyllysine; alternate modification. Lys75 carries the post-translational modification N6-acetyllysine. Lys85 carries the post-translational modification N6-acetyllysine; alternate. The residue at position 85 (Lys85) is an N6-succinyllysine; alternate. Thr93 bears the Phosphothreonine mark. Lys101 and Lys139 each carry N6-acetyllysine. Phosphoserine is present on Ser140. Lys158 is modified (N6-acetyllysine; alternate). Lys158 carries the post-translational modification N6-succinyllysine; alternate. Position 164 is an N6-acetyllysine (Lys164). Lys187 bears the N6-succinyllysine mark. Position 203 is an N6-acetyllysine; alternate (Lys203). Lys203 carries the post-translational modification N6-succinyllysine; alternate. Positions Thr205–Lys333 are domain II. N6-succinyllysine is present on Lys216. Arg223 is an FAD binding site. Lys226 and Lys232 each carry N6-acetyllysine; alternate. 2 positions are modified to N6-succinyllysine; alternate: Lys226 and Lys232. Residues Ser248, Val263–Thr266, Ser281–His286, and Asn300 each bind FAD. Lys301 bears the N6-succinyllysine mark. Residue Asp318–Leu319 coordinates FAD.

Belongs to the ETF alpha-subunit/FixB family. In terms of assembly, heterodimer composed of ETFA and ETFB. Identified in a complex that contains ETFA, ETFB and ETFRF1. Interaction with ETFRF1 promotes dissociation of the bound FAD and loss of electron transfer activity. Interacts with TASOR. It depends on FAD as a cofactor.

The protein localises to the mitochondrion matrix. In terms of biological role, heterodimeric electron transfer flavoprotein that accepts electrons from several mitochondrial dehydrogenases, including acyl-CoA dehydrogenases, glutaryl-CoA and sarcosine dehydrogenase. It transfers the electrons to the main mitochondrial respiratory chain via ETF-ubiquinone oxidoreductase (ETF dehydrogenase). Required for normal mitochondrial fatty acid oxidation and normal amino acid metabolism. This is Electron transfer flavoprotein subunit alpha, mitochondrial (ETFA) from Bos taurus (Bovine).